Here is a 197-residue protein sequence, read N- to C-terminus: Imidazoleglycerol-phosphate dehydratase (197 aa).

Belongs to the imidazoleglycerol-phosphate dehydratase family.

Its subcellular location is the cytoplasm. It catalyses the reaction D-erythro-1-(imidazol-4-yl)glycerol 3-phosphate = 3-(imidazol-4-yl)-2-oxopropyl phosphate + H2O. It functions in the pathway amino-acid biosynthesis; L-histidine biosynthesis; L-histidine from 5-phospho-alpha-D-ribose 1-diphosphate: step 6/9. This Pseudomonas fluorescens (strain Pf0-1) protein is Imidazoleglycerol-phosphate dehydratase.